The following is a 341-amino-acid chain: Ribosomal RNA small subunit methyltransferase H (341 aa).

S-adenosyl-L-methionine-binding positions include 47 to 49 (GGY), aspartate 64, phenylalanine 91, aspartate 109, and glutamine 116. Residues 292–318 (VAASEDEASRNPRARSAKLRAGVRTPA) form a disordered region.

Belongs to the methyltransferase superfamily. RsmH family.

The protein localises to the cytoplasm. The enzyme catalyses cytidine(1402) in 16S rRNA + S-adenosyl-L-methionine = N(4)-methylcytidine(1402) in 16S rRNA + S-adenosyl-L-homocysteine + H(+). Its function is as follows. Specifically methylates the N4 position of cytidine in position 1402 (C1402) of 16S rRNA. In Sinorhizobium fredii (strain NBRC 101917 / NGR234), this protein is Ribosomal RNA small subunit methyltransferase H.